The chain runs to 176 residues: Nucleoside triphosphate/diphosphate phosphatase (176 aa).

R23 acts as the Proton donor in catalysis. The Mg(2+) site is built by N87, D103, D105, D107, D120, and E123.

The protein belongs to the Ntdp family. It depends on Mg(2+) as a cofactor.

The enzyme catalyses a ribonucleoside 5'-triphosphate + H2O = a ribonucleoside 5'-diphosphate + phosphate + H(+). It carries out the reaction a ribonucleoside 5'-diphosphate + H2O = a ribonucleoside 5'-phosphate + phosphate + H(+). Functionally, has nucleoside phosphatase activity towards nucleoside triphosphates and nucleoside diphosphates. The sequence is that of Nucleoside triphosphate/diphosphate phosphatase from Bacillus licheniformis (strain ATCC 14580 / DSM 13 / JCM 2505 / CCUG 7422 / NBRC 12200 / NCIMB 9375 / NCTC 10341 / NRRL NRS-1264 / Gibson 46).